The sequence spans 130 residues: Small ribosomal subunit protein uS11 (130 aa).

The protein belongs to the universal ribosomal protein uS11 family. In terms of assembly, part of the 30S ribosomal subunit. Interacts with proteins S7 and S18. Binds to IF-3.

In terms of biological role, located on the platform of the 30S subunit, it bridges several disparate RNA helices of the 16S rRNA. Forms part of the Shine-Dalgarno cleft in the 70S ribosome. This Prochlorococcus marinus (strain MIT 9303) protein is Small ribosomal subunit protein uS11.